The following is a 159-amino-acid chain: Protein-export protein SecB (159 aa).

This sequence belongs to the SecB family. As to quaternary structure, homotetramer, a dimer of dimers. One homotetramer interacts with 1 SecA dimer.

Its subcellular location is the cytoplasm. One of the proteins required for the normal export of preproteins out of the cell cytoplasm. It is a molecular chaperone that binds to a subset of precursor proteins, maintaining them in a translocation-competent state. It also specifically binds to its receptor SecA. In Nitrosospira multiformis (strain ATCC 25196 / NCIMB 11849 / C 71), this protein is Protein-export protein SecB.